Here is a 954-residue protein sequence, read N- to C-terminus: Kinesin-like protein KIN-7A (954 aa).

The tract at residues methionine 1–arginine 29 is disordered. Positions threonine 17 to threonine 28 are enriched in low complexity. The Kinesin motor domain occupies lysine 34–valine 354. Glycine 119–threonine 126 is a binding site for ATP. Coiled coils occupy residues valine 363–glutamine 436 and leucine 480–serine 588. 2 disordered regions span residues proline 624–asparagine 689 and glycine 741–aspartate 762. Positions proline 630 to proline 639 are enriched in low complexity. Basic and acidic residues-rich tracts occupy residues leucine 640–glutamate 660 and lysine 666–arginine 681.

This sequence belongs to the TRAFAC class myosin-kinesin ATPase superfamily. Kinesin family. KIN-7 subfamily. In terms of tissue distribution, ubiquitous with a preferential expression in the shoot apical meristem (SAM).

Its function is as follows. May be essential to promote the progression of cytokinesis during node-internode differentiation. This chain is Kinesin-like protein KIN-7A, found in Oryza sativa subsp. japonica (Rice).